The chain runs to 326 residues: MNQWHYGRYSRGRDFTARAPPKKKGKNQIPERWKDYLPVGQRMPGTRFIAFKVPLQKKFEAKLMPEECFSPLDLFNKIQEQNEELGLIIDLTYTQRYYKVEDLPKTISYIKILTVGHQVPDSGTIFQFKSAVKEFLKRNKNNDKLIGVHCTHGLNRTGYLICRYLIDVEGMRPDDAIELFNRCRGHCIERQNYIENLQKRRVRKNQNASASRSGGLEDSAHLTEQVHTTNKPVNKGPKKSRRGGHLESSQHVQTQSSAYSFRKWSQNQSVYQRGFVPPPGPAGEDYSQRRFFWSMRPNGSQATHHKKWIAASYQRPFYPASWEWNV.

The tract at residues M1–Q28 is disordered. A Tyrosine-protein phosphatase domain is found at F59–Q206. Residue C150 is the Phosphocysteine intermediate of the active site. T151–R156 is a binding site for substrate. The active-site Proton donor/acceptor is R156. The interval R200 to A258 is disordered. The segment covering E247–A258 has biased composition (polar residues).

The protein belongs to the protein-tyrosine phosphatase family. Non-receptor class dual specificity subfamily. Monomer. May interact with SFRS7 and SFRS9/SRP30C.

It localises to the nucleus. Its subcellular location is the nucleus speckle. Possesses RNA 5'-triphosphatase and diphosphatase activities, but displays a poor protein-tyrosine phosphatase activity. In addition, has phosphatase activity with ATP, ADP and O-methylfluorescein phosphate (in vitro). Binds to RNA. May participate in nuclear mRNA metabolism. This is RNA/RNP complex-1-interacting phosphatase (Dusp11) from Rattus norvegicus (Rat).